A 171-amino-acid polypeptide reads, in one-letter code: NADH-ubiquinone oxidoreductase chain 6 (171 aa).

5 consecutive transmembrane segments (helical) span residues 1-21, 25-44, 49-71, 85-105, and 150-170; these read MYVM…ISSK, IYGG…IIMG, FMGL…YTTA, VVIW…VAWM, and WFAA…IEII.

The protein belongs to the complex I subunit 6 family. In terms of assembly, core subunit of respiratory chain NADH dehydrogenase (Complex I) which is composed of 45 different subunits.

The protein resides in the mitochondrion inner membrane. It catalyses the reaction a ubiquinone + NADH + 5 H(+)(in) = a ubiquinol + NAD(+) + 4 H(+)(out). Its function is as follows. Core subunit of the mitochondrial membrane respiratory chain NADH dehydrogenase (Complex I) which catalyzes electron transfer from NADH through the respiratory chain, using ubiquinone as an electron acceptor. Essential for the catalytic activity and assembly of complex I. This chain is NADH-ubiquinone oxidoreductase chain 6 (MT-ND6), found in Lemur catta (Ring-tailed lemur).